A 505-amino-acid chain; its full sequence is Forkhead box protein O4 (505 aa).

Disordered regions lie at residues 1–66, 175–244, and 257–276; these read MDPE…HSEP, SSWW…SPCP, and RPRS…PMRP. A Phosphothreonine; by PKB/AKT1 modification is found at Thr32. A required for interaction with FOXK1 region spans residues 97–215; sequence RRNAWGNQSY…RGRSKGPKKK (119 aa). A DNA-binding region (fork-head) is located at residues 100–188; that stretch reads AWGNQSYAEL…MLNPDGGKGG (89 aa). At Ser197 the chain carries Phosphoserine; by PKB/AKT1. Residues 205-216 show a composition bias toward basic residues; it reads LRGRSKGPKKKP. Residues 257–271 show a composition bias toward polar residues; that stretch reads RPRSSSNASTVSTRL. At Ser262 the chain carries Phosphoserine; by PKB/AKT1.

In terms of assembly, interacts with CREBBP/CBP, MYOCD, SIRT1, SRF and YWHAZ. Acetylated by CREBBP/CBP and deacetylated by SIRT1. Binding of YWHAZ inhibits DNA-binding. Interacts with USP7; the interaction is enhanced in presence of hydrogen peroxide and occurs independently of TP53. Interacts with NLK, and this inhibits monoubiquitination and transcriptional activity. Interacts with FOXK1; the interaction inhibits MEF2C transactivation activity. In terms of processing, acetylation by CREBBP/CBP is induced by oxidative stress and inhibits transcriptional activity. Deacetylation by SIRT1 is NAD-dependent and stimulates transcriptional activity. Phosphorylation by PKB/AKT1 inhibits transcriptional activity and is responsible for cytoplasmic localization. May be phosphorylated at multiple sites by NLK. Post-translationally, monoubiquitinated; monoubiquitination is induced by oxidative stress and reduced by deacetylase inhibitors; results in its relocalization to the nucleus and its increased transcriptional activity. Deubiquitinated by USP7; deubiquitination is induced by oxidative stress; enhances its interaction with USP7 and consequently, deubiquitination; increases its translocation to the cytoplasm and inhibits its transcriptional activity. Hydrogene-peroxide-induced ubiquitination and USP7-mediated deubiquitination have no major effect on its protein stability. Strongly expressed in brown adipose tissue and weakly in white adipose tissue (at protein level). Expressed in skeletal muscle.

The protein localises to the cytoplasm. The protein resides in the nucleus. Transcription factor involved in the regulation of the insulin signaling pathway. Binds to insulin-response elements (IREs) and can activate transcription of IGFBP1. Down-regulates expression of HIF1A and suppresses hypoxia-induced transcriptional activation of HIF1A-modulated genes. Also involved in negative regulation of the cell cycle. Involved in increased proteasome activity in embryonic stem cells (ESCs) by activating expression of PSMD11 in ESCs, leading to enhanced assembly of the 26S proteasome, followed by higher proteasome activity. Represses smooth muscle cell differentiation by inhibiting the transcriptional coactivator activity of myocardin. In Mus musculus (Mouse), this protein is Forkhead box protein O4 (Foxo4).